The chain runs to 63 residues: Sperm protamine P1 (63 aa).

A disordered region spans residues 1 to 63 (MARYRRHSRS…RYSRRGRRRY (63 aa)).

It belongs to the protamine P1 family. As to expression, testis.

It localises to the nucleus. It is found in the chromosome. Functionally, protamines substitute for histones in the chromatin of sperm during the haploid phase of spermatogenesis. They compact sperm DNA into a highly condensed, stable and inactive complex. The chain is Sperm protamine P1 (PRM1) from Sminthopsis bindi (Kakadu dunnart).